The following is a 180-amino-acid chain: Small ribosomal subunit protein uS5 (180 aa).

The interval methionine 1–glutamine 26 is disordered. A compositionally biased stretch (basic and acidic residues) spans arginine 17–glutamine 26. Residues tryptophan 25–valine 88 form the S5 DRBM domain.

Belongs to the universal ribosomal protein uS5 family. As to quaternary structure, part of the 30S ribosomal subunit. Contacts proteins S4 and S8.

In terms of biological role, with S4 and S12 plays an important role in translational accuracy. Functionally, located at the back of the 30S subunit body where it stabilizes the conformation of the head with respect to the body. The protein is Small ribosomal subunit protein uS5 of Synechococcus elongatus (strain ATCC 33912 / PCC 7942 / FACHB-805) (Anacystis nidulans R2).